A 272-amino-acid polypeptide reads, in one-letter code: Undecaprenyl-diphosphatase (272 aa).

Transmembrane regions (helical) follow at residues 2-22, 50-70, 83-103, 110-130, 148-168, 195-215, 220-240, and 250-270; these read LELI…WLPI, VIQL…LFPF, FSLW…GVPF, LFYN…LFII, LGYK…IPGT, LAIP…GFAF, LIIL…AIKF, and FKAF…YFLA.

Belongs to the UppP family.

The protein localises to the cell membrane. It carries out the reaction di-trans,octa-cis-undecaprenyl diphosphate + H2O = di-trans,octa-cis-undecaprenyl phosphate + phosphate + H(+). Catalyzes the dephosphorylation of undecaprenyl diphosphate (UPP). Confers resistance to bacitracin. The polypeptide is Undecaprenyl-diphosphatase (Acetivibrio thermocellus (strain ATCC 27405 / DSM 1237 / JCM 9322 / NBRC 103400 / NCIMB 10682 / NRRL B-4536 / VPI 7372) (Clostridium thermocellum)).